Consider the following 319-residue polypeptide: ATP-dependent 6-phosphofructokinase (319 aa).

An ATP-binding site is contributed by Gly11. 21–25 lines the ADP pocket; it reads RAVVR. Residues 72-73 and 102-105 contribute to the ATP site; these read RC and GDGS. Residue Asp103 coordinates Mg(2+). 125 to 127 contacts substrate; the sequence is TID. Residue Asp127 is the Proton acceptor of the active site. Arg154 is an ADP binding site. Substrate is bound by residues Arg162 and 169 to 171; that span reads MGR. Residues 185–187, Lys211, and 213–215 each bind ADP; these read GAE and KMH. Substrate contacts are provided by residues Glu222, Arg243, and 249-252; that span reads HIQR.

Belongs to the phosphofructokinase type A (PFKA) family. ATP-dependent PFK group I subfamily. Prokaryotic clade 'B1' sub-subfamily. Homotetramer. Mg(2+) is required as a cofactor.

It is found in the cytoplasm. It catalyses the reaction beta-D-fructose 6-phosphate + ATP = beta-D-fructose 1,6-bisphosphate + ADP + H(+). It participates in carbohydrate degradation; glycolysis; D-glyceraldehyde 3-phosphate and glycerone phosphate from D-glucose: step 3/4. Its activity is regulated as follows. Allosterically activated by ADP and other diphosphonucleosides, and allosterically inhibited by phosphoenolpyruvate. In terms of biological role, catalyzes the phosphorylation of D-fructose 6-phosphate to fructose 1,6-bisphosphate by ATP, the first committing step of glycolysis. This is ATP-dependent 6-phosphofructokinase from Clostridium botulinum (strain ATCC 19397 / Type A).